The following is a 470-amino-acid chain: Glutamate--tRNA ligase (470 aa).

The short motif at 9 to 19 is the 'HIGH' region element; it reads PSPTGFLHVGG. Residues 236-240 carry the 'KMSKS' region motif; the sequence is RLSKR. Lys-239 is an ATP binding site.

The protein belongs to the class-I aminoacyl-tRNA synthetase family. Glutamate--tRNA ligase type 1 subfamily. In terms of assembly, monomer.

The protein localises to the cytoplasm. It carries out the reaction tRNA(Glu) + L-glutamate + ATP = L-glutamyl-tRNA(Glu) + AMP + diphosphate. In terms of biological role, catalyzes the attachment of glutamate to tRNA(Glu) in a two-step reaction: glutamate is first activated by ATP to form Glu-AMP and then transferred to the acceptor end of tRNA(Glu). The chain is Glutamate--tRNA ligase from Legionella pneumophila (strain Paris).